A 230-amino-acid polypeptide reads, in one-letter code: MKRGKKYLTSLRIFDVKKTYPLQEAISLAKQTQVAKFDATVECAFHLNLDLKKVDQNLRGALVLPHGTGKVLKVAVLAKGEQAKQAQEAQADYVGDQDLIDKIAKNWFDFDVLVATPEMMPQLSKLGRLLGPKGLMPNPKTGTVTNDVLQAVKEIKNGKIEYRLDKSGNIHTILGKVSFDEAKLLENLKTLYLQLMAVKPRTVKGTYIKSVTISTTMAPGIKIDPVTISQ.

Belongs to the universal ribosomal protein uL1 family. As to quaternary structure, part of the 50S ribosomal subunit.

In terms of biological role, binds directly to 23S rRNA. The L1 stalk is quite mobile in the ribosome, and is involved in E site tRNA release. Protein L1 is also a translational repressor protein, it controls the translation of the L11 operon by binding to its mRNA. The chain is Large ribosomal subunit protein uL1 from Aster yellows witches'-broom phytoplasma (strain AYWB).